We begin with the raw amino-acid sequence, 304 residues long: Acetylglutamate kinase (304 aa).

Residues 75–76, arginine 97, and asparagine 196 contribute to the substrate site; that span reads GG.

It belongs to the acetylglutamate kinase family. ArgB subfamily.

Its subcellular location is the cytoplasm. The enzyme catalyses N-acetyl-L-glutamate + ATP = N-acetyl-L-glutamyl 5-phosphate + ADP. The protein operates within amino-acid biosynthesis; L-arginine biosynthesis; N(2)-acetyl-L-ornithine from L-glutamate: step 2/4. Its function is as follows. Catalyzes the ATP-dependent phosphorylation of N-acetyl-L-glutamate. This chain is Acetylglutamate kinase, found in Corynebacterium urealyticum (strain ATCC 43042 / DSM 7109).